We begin with the raw amino-acid sequence, 355 residues long: 3-dehydroquinate synthase (355 aa).

Residues 71 to 76 (EGEERK), 105 to 109 (GVVGD), 129 to 130 (TS), Lys-142, and Lys-151 each bind NAD(+). The Zn(2+) site is built by Glu-184, His-246, and His-263.

The protein belongs to the sugar phosphate cyclases superfamily. Dehydroquinate synthase family. Co(2+) serves as cofactor. Requires Zn(2+) as cofactor. It depends on NAD(+) as a cofactor.

It is found in the cytoplasm. It carries out the reaction 7-phospho-2-dehydro-3-deoxy-D-arabino-heptonate = 3-dehydroquinate + phosphate. The protein operates within metabolic intermediate biosynthesis; chorismate biosynthesis; chorismate from D-erythrose 4-phosphate and phosphoenolpyruvate: step 2/7. Catalyzes the conversion of 3-deoxy-D-arabino-heptulosonate 7-phosphate (DAHP) to dehydroquinate (DHQ). The chain is 3-dehydroquinate synthase from Streptococcus pneumoniae (strain ATCC 700669 / Spain 23F-1).